A 528-amino-acid chain; its full sequence is Major facilitator superfamily multidrug transporter mdr3 (528 aa).

The segment at 1-37 (MLAMAASAEETNRQSNAGRRSVISPSEAPPEAEQSDV) is disordered. Transmembrane regions (helical) follow at residues 50–70 (FILILCSTQLFVQGAFGYILI), 91–111 (WHVGGYSLTVGTFILIAGKLG), 119–139 (ILVLGWAWFGVWSVIGGCSAF), 149–169 (ARALQGIGPALLLPNALAIAG), 180–200 (MIFSAFAVAAPLGCFTAGVVG), 211–231 (WVMWTYSIGCFIIAAVGLWVI), and 241–261 (AATLQFDYIGSVLGVAGLLLL). N-linked (GlcNAc...) asparagine glycosylation is present at Asn-262. 5 helical membrane passes run 272–292 (GWSTPYVYVLLIGGFLVLGLF), 340–360 (VITSGWLMAIACAAFLGGCIL), 375–395 (FWSFVIMAWGMDISFPASTTI), 410–430 (SLVNTVINYSIAIGLGIAGTV), and 448–468 (ALWSSVGLAALAFGIALVFAV).

This sequence belongs to the major facilitator superfamily.

It localises to the cell membrane. Its function is as follows. Major facilitator superfamily transporter that confers resistance to azoles such as itraconazole. This Aspergillus fumigatus (strain ATCC MYA-4609 / CBS 101355 / FGSC A1100 / Af293) (Neosartorya fumigata) protein is Major facilitator superfamily multidrug transporter mdr3.